A 150-amino-acid polypeptide reads, in one-letter code: UPF0178 protein PSEEN5341 (150 aa).

This sequence belongs to the UPF0178 family.

This Pseudomonas entomophila (strain L48) protein is UPF0178 protein PSEEN5341.